A 213-amino-acid chain; its full sequence is Cytochrome c biogenesis ATP-binding export protein CcmA (213 aa).

Residues 3 to 211 form the ABC transporter domain; the sequence is LTAENLGVRR…QMTGFAGVET (209 aa). An ATP-binding site is contributed by 35-42; sequence GRNGSGKS.

Belongs to the ABC transporter superfamily. CcmA exporter (TC 3.A.1.107) family. The complex is composed of two ATP-binding proteins (CcmA) and two transmembrane proteins (CcmB).

It is found in the cell inner membrane. The enzyme catalyses heme b(in) + ATP + H2O = heme b(out) + ADP + phosphate + H(+). In terms of biological role, part of the ABC transporter complex CcmAB involved in the biogenesis of c-type cytochromes; once thought to export heme, this seems not to be the case, but its exact role is uncertain. Responsible for energy coupling to the transport system. This Agrobacterium fabrum (strain C58 / ATCC 33970) (Agrobacterium tumefaciens (strain C58)) protein is Cytochrome c biogenesis ATP-binding export protein CcmA.